The sequence spans 352 residues: MSDSQPLLLRAARGESVERTPVWMMRQAGRYMKVYRDLRDRYPSFRERSENPDLSYQISMQPFEAFQPDGVILFSDILTPLPGMGIDFDIVESKGPLIQKPIRSLSQIEALQPLEPNATMPFVGEVLGRLRESVGNKAAVLGFVGAPWTLAAYVVEGKSSKNYAVIKAMAFQQPDLLHRLLNHFAESIATYLRYQIDSGAQVVQMFDSWAGQLSPADYDTFAAPYQKRVVDLVKSTHPDTPMILYISGSAGVLERMGRTGVDIISLDWTVDMADGCARLPEHLGVQGNVDPGLLFGTPEAIRERIVDAVRKARGRRHILNLGHGILPGTPEDNAKVFFETGKTVDNLIGSAA.

Residues 26–30 (RQAGR), phenylalanine 45, aspartate 76, tyrosine 153, serine 208, and histidine 323 contribute to the substrate site.

The protein belongs to the uroporphyrinogen decarboxylase family. Homodimer.

The protein localises to the cytoplasm. It catalyses the reaction uroporphyrinogen III + 4 H(+) = coproporphyrinogen III + 4 CO2. It participates in porphyrin-containing compound metabolism; protoporphyrin-IX biosynthesis; coproporphyrinogen-III from 5-aminolevulinate: step 4/4. Catalyzes the decarboxylation of four acetate groups of uroporphyrinogen-III to yield coproporphyrinogen-III. The sequence is that of Uroporphyrinogen decarboxylase from Prochlorococcus marinus (strain MIT 9313).